A 1019-amino-acid polypeptide reads, in one-letter code: TOG array regulator of axonemal microtubules protein 2 (1019 aa).

4 disordered regions span residues Ala28–Arg54, Arg131–Ser158, Thr249–Pro311, and Ser991–Asp1019. Residues Ser1007 to Asp1019 show a composition bias toward polar residues.

This sequence belongs to the Crescerin family.

In Homo sapiens (Human), this protein is TOG array regulator of axonemal microtubules protein 2.